A 1187-amino-acid polypeptide reads, in one-letter code: Probable histidine kinase 5 (1187 aa).

The Extracellular segment spans residues 1 to 175 (MSRVGECGGG…QNNALSFNHG (175 aa)). A helical membrane pass occupies residues 176 to 196 (MIFSLSASLGIVVILVVITIF). Topologically, residues 197–226 (KRGKQANELCQHEKLLQTPSVKISRKWSKR) are cytoplasmic. The chain crosses the membrane as a helical span at residues 227–247 (ALLLGVLVGLCSSVWIFSSMH). Residues 248-531 (ADVVARRIEN…FKHAPSLPWS (284 aa)) are Extracellular-facing. A CHASE domain is found at 295–519 (NPSAIDQKTF…GDPTRKHVMH (225 aa)). A helical transmembrane segment spans residues 532 to 552 (AIMISSAVAIIVLLVGYIIYA). Residues 553–1187 (TLNSLEEAED…LEADATDPLT (635 aa)) lie on the Cytoplasmic side of the membrane. Residues 587–862 (TVSHEIRTPM…TFSFTAIFKE (276 aa)) enclose the Histidine kinase domain. Position 590 is a phosphohistidine; by autocatalysis (His-590). Response regulatory domains are found at residues 886–1017 (RALV…SKAL) and 1041–1178 (NILV…AHFL). Asp-942 and Asp-1091 each carry 4-aspartylphosphate.

In terms of processing, activation probably requires a transfer of a phosphate group between a His in the transmitter domain and an Asp of the receiver domain. In terms of tissue distribution, highly expressed in young leaves and at lower levels in roots, mature leaves, stems and spikelets.

It is found in the cell membrane. It catalyses the reaction ATP + protein L-histidine = ADP + protein N-phospho-L-histidine.. In terms of biological role, cytokinin receptor related to bacterial two-component regulators. Functions as a histidine kinase and transmits the stress signal to a downstream MAPK cascade. The polypeptide is Probable histidine kinase 5 (Oryza sativa subsp. japonica (Rice)).